Here is a 347-residue protein sequence, read N- to C-terminus: Protein-glutamate methylesterase/protein-glutamine glutaminase 1 (347 aa).

One can recognise a Response regulatory domain in the interval 6–123; that stretch reads RVLVVDDSAT…LRPFGDLAEK (118 aa). Asp57 carries the 4-aspartylphosphate modification. The region spanning 150-342 is the CheB-type methylesterase domain; it reads FRVGRKIVAI…EEILKMTAAR (193 aa). Catalysis depends on residues Ser162, His188, and Asp284.

It belongs to the CheB family. Post-translationally, phosphorylated by CheA. Phosphorylation of the N-terminal regulatory domain activates the methylesterase activity.

The protein resides in the cytoplasm. The catalysed reaction is [protein]-L-glutamate 5-O-methyl ester + H2O = L-glutamyl-[protein] + methanol + H(+). The enzyme catalyses L-glutaminyl-[protein] + H2O = L-glutamyl-[protein] + NH4(+). Its function is as follows. Involved in chemotaxis. Part of a chemotaxis signal transduction system that modulates chemotaxis in response to various stimuli. Catalyzes the demethylation of specific methylglutamate residues introduced into the chemoreceptors (methyl-accepting chemotaxis proteins or MCP) by CheR. Also mediates the irreversible deamidation of specific glutamine residues to glutamic acid. This chain is Protein-glutamate methylesterase/protein-glutamine glutaminase 1, found in Rhizobium johnstonii (strain DSM 114642 / LMG 32736 / 3841) (Rhizobium leguminosarum bv. viciae).